The sequence spans 506 residues: Cysteine--tRNA ligase (506 aa).

Zn(2+) is bound at residue cysteine 34. Residues 36 to 46 (PTVYDFAHIGN) carry the 'HIGH' region motif. Zn(2+) is bound by residues cysteine 230, histidine 269, and glutamate 273. Positions 302 to 306 (KMSKS) match the 'KMSKS' region motif. Lysine 305 serves as a coordination point for ATP.

It belongs to the class-I aminoacyl-tRNA synthetase family. In terms of assembly, monomer. Requires Zn(2+) as cofactor.

The protein localises to the cytoplasm. The catalysed reaction is tRNA(Cys) + L-cysteine + ATP = L-cysteinyl-tRNA(Cys) + AMP + diphosphate. This is Cysteine--tRNA ligase from Brucella suis biovar 1 (strain 1330).